The primary structure comprises 288 residues: MLVTEQIDALRAVIREHRQQGKRIAFVPTMGNLHNGHLTLVREAKNHADVVIVSIFVNPMQFDRAEDLVNYPRTLSDDCALLEQEGVTAVFTPTPAIMYPQGLETQTFVEVPEISYLLEGAMRPGHFRGVSTVVTKLFNIVQPDVACFGQKDYQQLALIRKMVRDMTMPIEIIGVPTVRAEDGLALSSRNGYLTAEERLIAPTLAKVMGWIGEQLPARQTAIPALITEAADKLNSAGFRTDAIDIVDAETLLPLSGQSTEAVILMAAWLGNRARLIDNLVVNLRATTR.

30 to 37 (MGNLHNGH) lines the ATP pocket. His-37 acts as the Proton donor in catalysis. Gln-61 is a binding site for (R)-pantoate. Gln-61 provides a ligand contact to beta-alanine. 149 to 152 (GQKD) contributes to the ATP binding site. Gln-155 lines the (R)-pantoate pocket. ATP contacts are provided by residues Val-178 and 186–189 (LSSR).

The protein belongs to the pantothenate synthetase family. In terms of assembly, homodimer.

Its subcellular location is the cytoplasm. The enzyme catalyses (R)-pantoate + beta-alanine + ATP = (R)-pantothenate + AMP + diphosphate + H(+). Its pathway is cofactor biosynthesis; (R)-pantothenate biosynthesis; (R)-pantothenate from (R)-pantoate and beta-alanine: step 1/1. Its function is as follows. Catalyzes the condensation of pantoate with beta-alanine in an ATP-dependent reaction via a pantoyl-adenylate intermediate. This Tolumonas auensis (strain DSM 9187 / NBRC 110442 / TA 4) protein is Pantothenate synthetase.